Reading from the N-terminus, the 453-residue chain is Allantoinase (453 aa).

6 residues coordinate Zn(2+): H59, H61, K146, H186, H242, and D315. N6-carboxylysine is present on K146.

This sequence belongs to the metallo-dependent hydrolases superfamily. Allantoinase family. As to quaternary structure, homotetramer. Requires Zn(2+) as cofactor. Carboxylation allows a single lysine to coordinate two zinc ions.

The enzyme catalyses (S)-allantoin + H2O = allantoate + H(+). The protein operates within nitrogen metabolism; (S)-allantoin degradation; allantoate from (S)-allantoin: step 1/1. Catalyzes the conversion of allantoin (5-ureidohydantoin) to allantoic acid by hydrolytic cleavage of the five-member hydantoin ring. The polypeptide is Allantoinase (Escherichia coli (strain 55989 / EAEC)).